A 375-amino-acid chain; its full sequence is 23S rRNA (uracil(747)-C(5))-methyltransferase RlmC (375 aa).

[4Fe-4S] cluster contacts are provided by Cys3, Cys11, Cys14, and Cys87. The S-adenosyl-L-methionine site is built by Gln212, Phe241, Glu262, and Asn307. The active-site Nucleophile is the Cys334.

This sequence belongs to the class I-like SAM-binding methyltransferase superfamily. RNA M5U methyltransferase family. RlmC subfamily.

It catalyses the reaction uridine(747) in 23S rRNA + S-adenosyl-L-methionine = 5-methyluridine(747) in 23S rRNA + S-adenosyl-L-homocysteine + H(+). In terms of biological role, catalyzes the formation of 5-methyl-uridine at position 747 (m5U747) in 23S rRNA. The sequence is that of 23S rRNA (uracil(747)-C(5))-methyltransferase RlmC from Enterobacter sp. (strain 638).